A 394-amino-acid chain; its full sequence is Elongation factor Tu (394 aa).

Residues 10–204 (RTHINVGTIG…ILDNYIPEPK (195 aa)) enclose the tr-type G domain. The interval 19 to 26 (GHVDHGKT) is G1. 19–26 (GHVDHGKT) lines the GTP pocket. Residue Thr26 participates in Mg(2+) binding. Residues 60-64 (GITIN) are G2. The G3 stretch occupies residues 81-84 (DCPG). Residues 81–85 (DCPGH) and 136–139 (NKCD) each bind GTP. Residues 136–139 (NKCD) are G4. The interval 174-176 (SAL) is G5.

Belongs to the TRAFAC class translation factor GTPase superfamily. Classic translation factor GTPase family. EF-Tu/EF-1A subfamily. In terms of assembly, monomer.

It localises to the cytoplasm. It carries out the reaction GTP + H2O = GDP + phosphate + H(+). Its function is as follows. GTP hydrolase that promotes the GTP-dependent binding of aminoacyl-tRNA to the A-site of ribosomes during protein biosynthesis. The polypeptide is Elongation factor Tu (Blochmanniella floridana).